The chain runs to 188 residues: Elongation factor P (188 aa).

It belongs to the elongation factor P family.

It is found in the cytoplasm. Its pathway is protein biosynthesis; polypeptide chain elongation. Involved in peptide bond synthesis. Stimulates efficient translation and peptide-bond synthesis on native or reconstituted 70S ribosomes in vitro. Probably functions indirectly by altering the affinity of the ribosome for aminoacyl-tRNA, thus increasing their reactivity as acceptors for peptidyl transferase. This Gemmatimonas aurantiaca (strain DSM 14586 / JCM 11422 / NBRC 100505 / T-27) protein is Elongation factor P.